Reading from the N-terminus, the 203-residue chain is Ras-related protein Rab-30 (203 aa).

Valine 20, glycine 21, lysine 22, threonine 23, cysteine 24, and threonine 41 together coordinate GTP. Mg(2+) is bound at residue threonine 23. The switch-I stretch occupies residues 36–44 (PGQGATIGV). Residues threonine 41 and aspartate 64 each contribute to the Mg(2+) site. Positions 67, 122, 123, 125, 153, and 154 each coordinate GTP. The segment at 67–83 (GQERFRSITQSYYRSAN) is switch-II. Residues cysteine 199 and cysteine 200 are each lipidated (S-geranylgeranyl cysteine). Cysteine 200 carries the post-translational modification Cysteine methyl ester. Positions 201–203 (NFN) are cleaved as a propeptide — removed in mature form.

It belongs to the small GTPase superfamily. Rab family. The cofactor is Mg(2+).

The protein localises to the membrane. Its subcellular location is the golgi apparatus. It is found in the trans-Golgi network membrane. It localises to the cis-Golgi network membrane. The protein resides in the golgi apparatus membrane. The protein localises to the cytoplasm. Its subcellular location is the cytoplasmic vesicle. It is found in the autophagosome membrane. It localises to the autolysosome membrane. The catalysed reaction is GTP + H2O = GDP + phosphate + H(+). Its activity is regulated as follows. Regulated by guanine nucleotide exchange factors (GEFs) which promote the exchange of bound GDP for free GTP. Regulated by GTPase activating proteins (GAPs) which increase the GTP hydrolysis activity. Inhibited by GDP dissociation inhibitors (GDIs). In terms of biological role, the small GTPases Rab are key regulators of intracellular membrane trafficking, from the formation of transport vesicles to their fusion with membranes. Rabs cycle between an inactive GDP-bound form and an active GTP-bound form that is able to recruit to membranes different sets of downstream effectors directly responsible for vesicle formation, movement, tethering and fusion. RAB30 is required for maintaining the structural integrity of the Golgi apparatus, possibly by mediating interactions with cytoplasmic scaffolding proteins. Facilitates lipid homeostasis during fasting by regulating hepatic protein and lipid trafficking in a PPAR-alpha-dependent manner. Promotes autophagosome biogenesis during bacterial infection such as group A Streptococcus infection. This is Ras-related protein Rab-30 (RAB30) from Bos taurus (Bovine).